A 332-amino-acid chain; its full sequence is 2,3-diketo-L-gulonate reductase (332 aa).

The active-site Proton donor is the H44. Residues I168 to S174, W224 to K225, and G304 to E306 each bind NAD(+).

The protein belongs to the LDH2/MDH2 oxidoreductase family. DlgD subfamily. In terms of assembly, homodimer.

Its subcellular location is the cytoplasm. It carries out the reaction 3-dehydro-L-gulonate + NAD(+) = 2,3-dioxo-L-gulonate + NADH + H(+). The enzyme catalyses 3-dehydro-L-gulonate + NADP(+) = 2,3-dioxo-L-gulonate + NADPH + H(+). Functionally, catalyzes the reduction of 2,3-diketo-L-gulonate in the presence of NADH, to form 3-keto-L-gulonate. This chain is 2,3-diketo-L-gulonate reductase, found in Salmonella heidelberg (strain SL476).